A 75-amino-acid chain; its full sequence is U6-lycotoxin-Ls1f (75 aa).

Residues 1-21 (MKLLLFTALVLVVISLVEVEA) form the signal peptide. A propeptide spanning residues 22–25 (ENER) is cleaved from the precursor.

This sequence belongs to the neurotoxin 19 (CSTX) family. 06 (U6-Lctx) subfamily. Contains 4 disulfide bonds. In terms of tissue distribution, expressed by the venom gland.

The protein resides in the secreted. In Lycosa singoriensis (Wolf spider), this protein is U6-lycotoxin-Ls1f.